A 537-amino-acid chain; its full sequence is MSWKVVLLLVLLATPTGGLEESYLEESCSTVTRGYLSVLRTGWYTNVFTLEVGDVENLTCTDGPSLIRTELELTKNALEELKTVSADQLAKEARIMSPRKARFVLGAIALGVATAAAVTAGVAIAKTIRLEGEVAAIKGALRKTNEAVSTLGNGVRVLATAVNDLKDFISKKLTPAINKNKCDISDLKMAVSFGQYNRRFLNVVRQFSDNAGITPAISLDLMTDAELVRAVSNMPTSSGQINLMLENRAMVRRKGFGILIGVYGSSVVYMVQLPIFGVIDTPCWKVKAAPLCSGKDGSYACLLREDQGWYCQNAGSTVYYPNEEDCEVRSDHVFCDTAAGINVAKESEECNRNISTTKYPCKVSTGRHPISMVALSPLGALVACYDGVSCSIGSNKVGIIRPLGKGCSYISNQDADTVTIDNPVYQLSKVEGEQHTIKGKPVSSNFDPIEFPEDQFNIALDQVFESVEKSKNLIDQSNKILDSTEKGNAGFVMVIVLIVLLMLAAVGVGIFFVVKKRKAAPKFPMEMNGVNNKGFIP.

Positions 1–18 (MSWKVVLLLVLLATPTGG) are cleaved as a signal peptide. Over 27-493 (SCSTVTRGYL…TEKGNAGFVM (467 aa)) the chain is Extracellular. Intrachain disulfides connect Cys-28/Cys-407, Cys-60/Cys-182, Cys-283/Cys-311, Cys-292/Cys-301, Cys-326/Cys-335, Cys-350/Cys-361, and Cys-384/Cys-390. Asn-57 is a glycosylation site (N-linked (GlcNAc...) asparagine; by host). Fusion peptide stretches follow at residues 103 to 124 (FVLG…GVAI) and 103 to 127 (FVLG…IAKT). The stretch at 125 to 153 (AKTIRLEGEVAAIKGALRKTNEAVSTLGN) forms a coiled coil. Asn-353 is a glycosylation site (N-linked (GlcNAc...) asparagine; by host). The stretch at 459–484 (ALDQVFESVEKSKNLIDQSNKILDST) forms a coiled coil. The helical transmembrane segment at 494 to 514 (VIVLIVLLMLAAVGVGIFFVV) threads the bilayer. At 515–537 (KKRKAAPKFPMEMNGVNNKGFIP) the chain is on the cytoplasmic side.

Belongs to the paramyxoviruses fusion glycoprotein family. Homotrimer. Heterodimer with fusion protein F2; disulfide-linked. As a heterodimer with F2, interacts with host heparan sulfate. Part of a complex composed of F1, F2 and G glycoproteins. In terms of assembly, homotrimer. Heterodimer with fusion protein F1; disulfide-linked. As a heterodimer with F1, interacts with host heparan sulfate. Part of a complex composed of F1, F2 and G glycoproteins. Post-translationally, the F glycoprotein is synthesized as a F0 inactive precursor that is heavily N-glycosylated and processed.

The protein resides in the host Golgi apparatus membrane. The protein localises to the virion membrane. It localises to the host cell membrane. Functionally, inactive precursor that is cleaved to give rise to the mature F1 and F2 fusion glycoproteins. Its function is as follows. Class I viral fusion protein. Under the current model, the protein has at least 3 conformational states: pre-fusion native state, pre-hairpin intermediate state, and post-fusion hairpin state. During viral and plasma cell membrane fusion, the coiled coil regions assume a trimer-of-hairpins structure, positioning the fusion peptide in close proximity to the C-terminal region of the ectodomain. The formation of this structure appears to drive apposition and subsequent fusion of viral and cellular membranes leading to delivery of the nucleocapsid into the cytoplasm. This fusion is pH independent and occurs at the plasma or endosomal membrane. The trimer of F1-F2 (F protein) also facilitates the attachment to host cell by binding to host heparan sulfate. Major determinant of the species specificity of RSV infection. The trimer of F1-F2 (F protein) also facilitates the attachment to host cell by binding to host heparan sulfate. The polypeptide is Fusion glycoprotein F0 (F) (Avian metapneumovirus (isolate Canada goose/Minnesota/15a/2001) (AMPV)).